Here is a 711-residue protein sequence, read N- to C-terminus: Amyloid beta precursor protein binding family B member 1 (711 aa).

Serine 135 carries the post-translational modification Phosphoserine. Disordered stretches follow at residues 140-257 (NTQG…SDLP), 277-300 (GTTQ…EESQ), and 321-364 (EPSE…QRNA). A compositionally biased stretch (acidic residues) spans 156 to 174 (EVEEEDEDEEEEDEEEEDL). Lysine 205 is modified (N6-acetyllysine). The segment covering 224–235 (SWATLSQGSPSY) has biased composition (polar residues). The WW domain maps to 254–286 (SDLPAGWMRVQDTSGTYYWHIPTGTTQWEPPGR). A compositionally biased stretch (polar residues) spans 288–300 (SPSQGNSPQEESQ). PID domains are found at residues 365-533 (NPGI…QVEF) and 538-700 (NELV…LWGS). Serine 460 carries the phosphoserine; by PKC modification. Serine 518 bears the Phosphoserine mark. Tyrosine 548 carries the post-translational modification Phosphotyrosine; by ABL1. Phosphoserine; by SGK1 is present on serine 611. Lysine 702 is subject to N6-acetyllysine.

Component of a complex, at least composed of APBB1, RASD1/DEXRAS1 and APP. Interacts (via PID domain 2) with APP (with the intracellular domain of the amyloid-beta precursor protein). Interacts (via PID domain 2) with RASD1/DEXRAS1; impairs the transcription activation activity. Interacts (via PID domain 1) with KAT5/TIP60. Interacts (via the WW domain) with the proline-rich region of APBB1IP. Interacts with TSHZ1 and TSHZ2. Interacts (via the WW domain) with histone H2AX (when phosphorylated on 'Tyr-142') and the proline-rich region of ENAH. Interacts with MAPK8. Interacts (via PID domain 1) with TSHZ3 (via homeobox domain). Interacts with SET. Found in a trimeric complex with HDAC1 and TSHZ3; the interaction between HDAC1 and APBB1 is mediated by TSHZ3. Interacts (via WWW domain) with NEK6. Interacts (via WWW domain) with ABL1. Interacts with RNF157. Interacts with ARF6. Post-translationally, polyubiquitination by RNF157 leads to degradation by the proteasome. In terms of processing, phosphorylation at Ser-611 by SGK1 promotes its localization to the nucleus. Phosphorylated following nuclear translocation. Phosphorylation at Tyr-547 by ABL1 enhances transcriptional activation activity and reduces the affinity for RASD1/DEXRAS1. Phosphorylated at Ser-460 by PKC upon insulin activation. Acetylation at Lys-205 and Lys-702 by KAT5 promotes its transcription activator activity. In terms of tissue distribution, brain, not in liver, very low in other tissues. The long (neuron-specific) form is expressed only in brain.

It localises to the cell membrane. Its subcellular location is the cytoplasm. The protein resides in the nucleus. The protein localises to the cell projection. It is found in the growth cone. It localises to the nucleus speckle. In terms of biological role, transcription coregulator that can have both coactivator and corepressor functions. Adapter protein that forms a transcriptionally active complex with the gamma-secretase-derived amyloid precursor protein (APP) intracellular domain. Plays a central role in the response to DNA damage by translocating to the nucleus and inducing apoptosis. May act by specifically recognizing and binding histone H2AX phosphorylated on 'Tyr-142' (H2AXY142ph) at double-strand breaks (DSBs), recruiting other pro-apoptosis factors such as MAPK8/JNK1. Required for histone H4 acetylation at double-strand breaks (DSBs). Its ability to specifically bind modified histones and chromatin modifying enzymes such as KAT5/TIP60, probably explains its transcription activation activity. Functions in association with TSHZ3, SET and HDAC factors as a transcriptional repressor, that inhibits the expression of CASP4. Associates with chromatin in a region surrounding the CASP4 transcriptional start site(s). Involved in hippocampal neurite branching and neuromuscular junction formation, as a result plays a role in spatial memory functioning. Plays a role in the maintenance of lens transparency. May play a role in muscle cell strength. Acts as a molecular adapter that functions in neurite outgrowth by activating the RAC1-ARF6 axis upon insulin treatment. The sequence is that of Amyloid beta precursor protein binding family B member 1 from Rattus norvegicus (Rat).